Here is a 525-residue protein sequence, read N- to C-terminus: Mitochondrial-processing peptidase subunit alpha (525 aa).

The N-terminal 33 residues, 1-33, are a transit peptide targeting the mitochondrion; it reads MAAVVLAATRLLRGSGSWGCSRLRFGPPAYRRF. Position 64 is an N6-succinyllysine (Lys-64). Lys-299 bears the N6-acetyllysine mark.

This sequence belongs to the peptidase M16 family. As to quaternary structure, heterodimer of PMPCA (alpha) and PMPCB (beta) subunits, forming the mitochondrial processing protease (MPP) in which PMPCA is involved in substrate recognition and binding and PMPCB is the catalytic subunit.

The protein localises to the mitochondrion matrix. Its subcellular location is the mitochondrion inner membrane. Functionally, substrate recognition and binding subunit of the essential mitochondrial processing protease (MPP), which cleaves the mitochondrial sequence off newly imported precursors proteins. This Pongo abelii (Sumatran orangutan) protein is Mitochondrial-processing peptidase subunit alpha (PMPCA).